The sequence spans 371 residues: MSVKYGKFEMPHKITVDQESPESNFARYVAEPFERGFGHTIGNALRRMMLSSLEAPAIISVRVEGIPHEYMAIEGISEDMTNIILNFKGALLRKLPTEETPRDTRILTKVVEVTQDDLDRNQGQYCVTLQDVVQEGNFEIVNPELHLFTVTKPMRRQVDLRIAFGRGYVPSERHVVRDKTSDEILVDAAFSPVRLINYFIENTRVGQDTDFDRLIMEVTTDGRITPAEALSFAVQIGLKHFEVFNQFNNYALSFDEKDGDRNGDQDELMDKLSLGIDEIELSVRSANCLTGANIETLAELVCIPERRMLEFRNFGKKSLNEIKAKLHEMSLHLGMDLSRFGVSPDNVKDKIKQYREEKKKKKELVKHEDAK.

The interval 1–248 is alpha N-terminal domain (alpha-NTD); the sequence is MSVKYGKFEM…KHFEVFNQFN (248 aa). Positions 264-371 are alpha C-terminal domain (alpha-CTD); sequence DQDELMDKLS…KELVKHEDAK (108 aa).

The protein belongs to the RNA polymerase alpha chain family. In terms of assembly, homodimer. The RNAP catalytic core consists of 2 alpha, 1 beta, 1 beta' and 1 omega subunit. When a sigma factor is associated with the core the holoenzyme is formed, which can initiate transcription.

The enzyme catalyses RNA(n) + a ribonucleoside 5'-triphosphate = RNA(n+1) + diphosphate. DNA-dependent RNA polymerase catalyzes the transcription of DNA into RNA using the four ribonucleoside triphosphates as substrates. This is DNA-directed RNA polymerase subunit alpha from Protochlamydia amoebophila (strain UWE25).